The chain runs to 177 residues: Deoxyuridine 5'-triphosphate nucleotidohydrolase (177 aa).

Residues 83 to 85 (RSG), Asn-96, 100 to 102 (TID), and Lys-110 contribute to the substrate site. The span at 150–163 (DLTSSQTDLSNQPN) shows a compositional bias: polar residues. A disordered region spans residues 150 to 177 (DLTSSQTDLSNQPNTGRGTGGFGSTGQK). Positions 166-177 (RGTGGFGSTGQK) are enriched in gly residues.

The protein belongs to the dUTPase family. Requires Mg(2+) as cofactor.

It catalyses the reaction dUTP + H2O = dUMP + diphosphate + H(+). The protein operates within pyrimidine metabolism; dUMP biosynthesis; dUMP from dCTP (dUTP route): step 2/2. In terms of biological role, this enzyme is involved in nucleotide metabolism: it produces dUMP, the immediate precursor of thymidine nucleotides and it decreases the intracellular concentration of dUTP so that uracil cannot be incorporated into DNA. This Bartonella bacilliformis (strain ATCC 35685 / KC583 / Herrer 020/F12,63) protein is Deoxyuridine 5'-triphosphate nucleotidohydrolase.